A 316-amino-acid chain; its full sequence is Lipoyl synthase (316 aa).

Positions 1–19 are enriched in basic and acidic residues; it reads MRDLKIPEQRHPEKAHRPD. Positions 1–31 are disordered; it reads MRDLKIPEQRHPEKAHRPDNAQPKKPSWIRV. The [4Fe-4S] cluster site is built by Cys55, Cys60, Cys66, Cys81, Cys85, Cys88, and Ser295. In terms of domain architecture, Radical SAM core spans 67-284; that stretch reads WSQGHATMMI…EKAAYGKGFL (218 aa).

It belongs to the radical SAM superfamily. Lipoyl synthase family. It depends on [4Fe-4S] cluster as a cofactor.

The protein resides in the cytoplasm. It catalyses the reaction [[Fe-S] cluster scaffold protein carrying a second [4Fe-4S](2+) cluster] + N(6)-octanoyl-L-lysyl-[protein] + 2 oxidized [2Fe-2S]-[ferredoxin] + 2 S-adenosyl-L-methionine + 4 H(+) = [[Fe-S] cluster scaffold protein] + N(6)-[(R)-dihydrolipoyl]-L-lysyl-[protein] + 4 Fe(3+) + 2 hydrogen sulfide + 2 5'-deoxyadenosine + 2 L-methionine + 2 reduced [2Fe-2S]-[ferredoxin]. It participates in protein modification; protein lipoylation via endogenous pathway; protein N(6)-(lipoyl)lysine from octanoyl-[acyl-carrier-protein]: step 2/2. Its function is as follows. Catalyzes the radical-mediated insertion of two sulfur atoms into the C-6 and C-8 positions of the octanoyl moiety bound to the lipoyl domains of lipoate-dependent enzymes, thereby converting the octanoylated domains into lipoylated derivatives. The sequence is that of Lipoyl synthase from Ruegeria sp. (strain TM1040) (Silicibacter sp.).